The following is a 108-amino-acid chain: ATP synthase peripheral stalk subunit F6, mitochondrial (108 aa).

The transit peptide at 1–32 (MILQRLFRFSSIIRSAVSVHFRRNIGVTAVAF) directs the protein to the mitochondrion. An N6-acetyllysine mark is found at Lys41, Lys46, and Lys79. 3 positions are modified to N6-acetyllysine; alternate: Lys84, Lys94, and Lys99. An N6-succinyllysine; alternate mark is found at Lys84, Lys94, and Lys99. Lys105 carries the N6-acetyllysine modification.

The protein belongs to the eukaryotic ATPase subunit F6 family. Component of the ATP synthase complex composed at least of ATP5F1A/subunit alpha, ATP5F1B/subunit beta, ATP5MC1/subunit c (homooctomer), MT-ATP6/subunit a, MT-ATP8/subunit 8, ATP5ME/subunit e, ATP5MF/subunit f, ATP5MG/subunit g, ATP5MK/subunit k, ATP5MJ/subunit j, ATP5F1C/subunit gamma, ATP5F1D/subunit delta, ATP5F1E/subunit epsilon, ATP5PF/subunit F6, ATP5PB/subunit b, ATP5PD/subunit d, ATP5PO/subunit OSCP. ATP synthase complex consists of a soluble F(1) head domain (subunits alpha(3) and beta(3)) - the catalytic core - and a membrane F(0) domain - the membrane proton channel (subunits c, a, 8, e, f, g, k and j). These two domains are linked by a central stalk (subunits gamma, delta, and epsilon) rotating inside the F1 region and a stationary peripheral stalk (subunits F6, b, d, and OSCP).

Its subcellular location is the mitochondrion. It is found in the mitochondrion inner membrane. In terms of biological role, subunit F6, of the mitochondrial membrane ATP synthase complex (F(1)F(0) ATP synthase or Complex V) that produces ATP from ADP in the presence of a proton gradient across the membrane which is generated by electron transport complexes of the respiratory chain. ATP synthase complex consist of a soluble F(1) head domain - the catalytic core - and a membrane F(1) domain - the membrane proton channel. These two domains are linked by a central stalk rotating inside the F(1) region and a stationary peripheral stalk. During catalysis, ATP synthesis in the catalytic domain of F(1) is coupled via a rotary mechanism of the central stalk subunits to proton translocation. In vivo, can only synthesize ATP although its ATP hydrolase activity can be activated artificially in vitro. Part of the complex F(0) domain. Part of the complex F(0) domain and the peripheric stalk, which acts as a stator to hold the catalytic alpha(3)beta(3) subcomplex and subunit a/ATP6 static relative to the rotary elements. This chain is ATP synthase peripheral stalk subunit F6, mitochondrial, found in Macaca fascicularis (Crab-eating macaque).